We begin with the raw amino-acid sequence, 432 residues long: Serine/threonine-protein kinase CDG1 (432 aa).

2 S-palmitoyl cysteine lipidation sites follow: C4 and C6. A compositionally biased stretch (basic residues) spans 15–24 (LKDKSHKRSI). The disordered stretch occupies residues 15 to 47 (LKDKSHKRSIRNQTSSSSAQPAGTAKEVDSSSS). Residues 25–35 (RNQTSSSSAQP) show a composition bias toward polar residues. A phosphoserine mark is found at S44 and S47. The Protein kinase domain maps to 74-354 (FRNESLIGRG…SQVVECLKYI (281 aa)). ATP is bound by residues 80-88 (IGRGGFGTV) and K102. Residue Y147 is modified to Phosphotyrosine. D200 (proton acceptor) is an active-site residue. A phosphoserine mark is found at S204 and S234. Residues T235 and T240 each carry the phosphothreonine modification. Y248 is subject to Phosphotyrosine.

The protein belongs to the protein kinase superfamily. Ser/Thr protein kinase family. In terms of assembly, interacts with BSU1, BSL1 and BRI1. Phosphorylated at Ser-44, Ser-47 and Ser-234 by BRI1. As to expression, expressed at high levels in the stamen and pollen grains. Expressed at a very low level in vegetative tissues.

The protein localises to the cell membrane. The catalysed reaction is L-seryl-[protein] + ATP = O-phospho-L-seryl-[protein] + ADP + H(+). It carries out the reaction L-threonyl-[protein] + ATP = O-phospho-L-threonyl-[protein] + ADP + H(+). Activated by phosphorylation at Ser-234. Functionally, serine/threonine-protein kinase involved in the positive regulation of brassinosteroid (BR) signaling and plant growth. Mediates BR signal transduction from BRI1 receptor kinase to BSU1 phosphatase. After activation by phosphorylation at Ser-234 by BRI1, CDG1 phosphorylates BSU1 at 'Ser-764' in the phosphatase domain, increasing the ability of BSU1 to inactivate the negative regulator of BR signaling ASK7/BIN2 by dephosphorylation at 'Tyr-200'. The full kinase activity of CDG1 is required for its biological function. This chain is Serine/threonine-protein kinase CDG1, found in Arabidopsis thaliana (Mouse-ear cress).